A 701-amino-acid polypeptide reads, in one-letter code: MTEHGIKWGCEYCTYENWPSAIKCTMCRAPRPSGAIITEEPFKNSTPDVGSMERDIGSPLICPDSSARPRVKSSYSMEPSSKWSCQICTYLNWPRAIRCTQCLSQRRTRSPTESPQSSGSGLRSIPSPIDPCEEYNDRNKLNIKGQHWTCSACTYENCAKAKKCVVCDHPTPNNMDAIELANTDEASSIINEQDRARWRGGCSSSNSQRRSPPTSKRDSDMDFQRIELAGAVGSKEEFELDLKKLKQIKNRMRKTDWLFLNACVGIVEGDLSAVESYKTSGGDIARQLSADEVRLLNRPSAFDVGYTLVHLSIRFQRQDMLAILLTEVSQHAAKCIPAMVCPELTEQIRREIAASVHQRKGDFACYFLTDLVTFTLPADIEDLPPTVQEKLFDEVLDRDVQKELEEESPIINWSLELGTRLDSRLYALWNRTAGDCLLDSVLQATWGIYDKDSVLRKALHDSLHDCSHWFYSRWKEWESWYSQSFGLHFSLREEQWQEDWAFILSLASQPGASLEQTHIFVLAHILRRPIIVYGVKYYKSFRGETLGYTRFQGVYLPLLWEQSFCWKSPIALGYTRGHFSALVAMENDGFDNRGAGANLNTDDDITVTFLPLVDSERKLLHIHFLSAQELGNEDQQEKLLREWMDCCVTEGGVLVAMQKSSRRRNHPLVTQMVEKWLDGYRQIRPCTALSDGEEDEDDEDE.

3 consecutive RanBP2-type zinc fingers follow at residues 3–33, 79–108, and 143–173; these read EHGI…PRPS, PSSK…QRRT, and IKGQ…PTPN. Residues C10, C13, C24, C27, C85, C88, C99, and C102 each contribute to the Zn(2+) site. The span at 108–121 shows a compositional bias: polar residues; sequence TRSPTESPQSSGSG. The disordered stretch occupies residues 108–129; the sequence is TRSPTESPQSSGSGLRSIPSPI. The Zn(2+) site is built by C150, C153, C164, and C167. Residues 198-219 are disordered; the sequence is WRGGCSSSNSQRRSPPTSKRDS. Residues 202–214 are compositionally biased toward polar residues; sequence CSSSNSQRRSPPT. ANK repeat units lie at residues 253–283 and 306–333; these read RKTD…SGGD and YTLV…QHAA. An OTU domain is found at 425–585; the sequence is LYALWNRTAG…RGHFSALVAM (161 aa). The active-site Nucleophile is the C436. Residue H578 is the Proton acceptor of the active site.

Belongs to the peptidase C64 family.

The protein resides in the cytoplasm. It is found in the nucleus. The enzyme catalyses Thiol-dependent hydrolysis of ester, thioester, amide, peptide and isopeptide bonds formed by the C-terminal Gly of ubiquitin (a 76-residue protein attached to proteins as an intracellular targeting signal).. Functionally, ubiquitin thioesterase, which specifically hydrolyzes 'Lys-29'-linked and 'Lys-33'-linked diubiquitin. Also cleaves 'Lys-63'-linked chains, but with 40-fold less efficiency compared to 'Lys-29'-linked ones. Positive regulator of the Wnt signaling pathway that deubiquitinates apc protein, a negative regulator of Wnt-mediated transcription. Acts as a regulator of autophagy by mediating deubiquitination of pik3c3/vps34, thereby promoting autophagosome maturation. Plays a role in the regulation of cell morphology and cytoskeletal organization. Required in the stress fiber dynamics and cell migration. This is Ubiquitin thioesterase zranb1-A (zranb1-a) from Xenopus laevis (African clawed frog).